The following is a 545-amino-acid chain: Acetamidase (545 aa).

Residues lysine 130 and serine 205 each act as charge relay system in the active site. Residue serine 229 is the Acyl-ester intermediate of the active site.

This sequence belongs to the amidase family.

It catalyses the reaction a monocarboxylic acid amide + H2O = a monocarboxylate + NH4(+). It carries out the reaction acetamide + H2O = acetate + NH4(+). Allows acetamide to be used as a sole carbon or nitrogen source. The sequence is that of Acetamidase (amdS) from Aspergillus oryzae (strain ATCC 42149 / RIB 40) (Yellow koji mold).